Here is a 450-residue protein sequence, read N- to C-terminus: Glutamyl-tRNA reductase (450 aa).

Substrate contacts are provided by residues 45–48, Ser107, 112–114, and Gln118; these read TCNR and ERE. The Nucleophile role is filled by Cys46. 196 to 201 is a binding site for NADP(+); the sequence is GTGAYA.

The protein belongs to the glutamyl-tRNA reductase family. In terms of assembly, homodimer.

The enzyme catalyses (S)-4-amino-5-oxopentanoate + tRNA(Glu) + NADP(+) = L-glutamyl-tRNA(Glu) + NADPH + H(+). Its pathway is porphyrin-containing compound metabolism; protoporphyrin-IX biosynthesis; 5-aminolevulinate from L-glutamyl-tRNA(Glu): step 1/2. Catalyzes the NADPH-dependent reduction of glutamyl-tRNA(Glu) to glutamate 1-semialdehyde (GSA). The polypeptide is Glutamyl-tRNA reductase (Micrococcus luteus (strain ATCC 4698 / DSM 20030 / JCM 1464 / CCM 169 / CCUG 5858 / IAM 1056 / NBRC 3333 / NCIMB 9278 / NCTC 2665 / VKM Ac-2230) (Micrococcus lysodeikticus)).